Reading from the N-terminus, the 270-residue chain is Putative phosphoenolpyruvate synthase regulatory protein (270 aa).

ADP is bound at residue 150–157 (GVSRCGKT).

The protein belongs to the pyruvate, phosphate/water dikinase regulatory protein family. PSRP subfamily.

The catalysed reaction is [pyruvate, water dikinase] + ADP = [pyruvate, water dikinase]-phosphate + AMP + H(+). The enzyme catalyses [pyruvate, water dikinase]-phosphate + phosphate + H(+) = [pyruvate, water dikinase] + diphosphate. In terms of biological role, bifunctional serine/threonine kinase and phosphorylase involved in the regulation of the phosphoenolpyruvate synthase (PEPS) by catalyzing its phosphorylation/dephosphorylation. The sequence is that of Putative phosphoenolpyruvate synthase regulatory protein from Shewanella woodyi (strain ATCC 51908 / MS32).